The primary structure comprises 506 residues: Maturase K (506 aa).

This sequence belongs to the intron maturase 2 family. MatK subfamily.

Its subcellular location is the plastid. The protein localises to the chloroplast. In terms of biological role, usually encoded in the trnK tRNA gene intron. Probably assists in splicing its own and other chloroplast group II introns. This Trifolium repens (Creeping white clover) protein is Maturase K.